A 936-amino-acid polypeptide reads, in one-letter code: MAAQRNRSKESKDCSGLVLLCLFFGIPWEAGARQISYSIPEELEKGSFVGNISKDLGLAPRELAERGVRIVSRGRTQLFSLNPRSGSLITAGRIDREELCAQSARCVVSFNILVEDRVKLFGIEIEVTDINDNAPKFQAENLDVKINENVAAGMRFPLPEAIDPDVGVNSLQSYQLSPNKHFSLRVQSRANGVKYPELVLEHSLDREEEAIHHLVLTASDGGDPLRSGTVLVSVTVFDANDNAPVFTLPEYRVSVPENLPVGTQLLTVTATDRDEGANGEVTYSFRKLPDTQLLKFQLNKYTGEIKISENLDYEETGFYEIEIQAEDGGAYLATAKVLITVEDVNDNSPELTITSLFSPVTEDSPLGTVVALLNVHDLDSEQNGQVTCSILAYLPFKLEKSIDSYYRLVIHRALDREQVSSYNITVTATDGGSPPLSTEAHFMLQVADINDNPPTFSQVSYFTYIPENNARGASIFSVTALDPDSKENAQIIYSLAEDTIQGVPLSSYISINSDTGVLYALRSFDYEQFHELQMQVTASDSGDPPLSSNVSLSLFVLDQNDNAPEILYPALPTDGSTGVELAPRSAEPGYLVTKVVAVDRDSGQNAWLSYRLLKASEPGLFAVGEHTGEVRTARALLDRDALKQSLVVAVQDHGQPPLSATVTLTVAVADSIPQVLADLGSFESPANSETSDLTLYLVVAVAAVSCVFLAFVIVLLAHRLRRWHKSRLLQASGGGLTGVSGSHFVGVDGVRAFLQTYSHEVSLTADSRKSHLIFPQPNYADTLISQESCEKNDPLSLLDDSKFPIEDTPLVPQAPPNTDWRFSQAQRPGTSGSQNGDDTGTWPNNQFDTEMLQAMILASASEAADGSSTLGGGAGTMGLSARYGPQFTLQHVPDYRQNVYIPGSNATLTNAAGKRDGKAPAGGNGNKKKSGKKEKK.

An N-terminal signal peptide occupies residues 1 to 32 (MAAQRNRSKESKDCSGLVLLCLFFGIPWEAGA). 6 Cadherin domains span residues 33–137 (RQIS…APKF), 138–246 (QAEN…APVF), 247–351 (TLPE…SPEL), 352–456 (TITS…PPTF), 457–566 (SQVS…APEI), and 574–687 (DGST…SPAN). The Extracellular segment spans residues 33 to 696 (RQISYSIPEE…NSETSDLTLY (664 aa)). The N-linked (GlcNAc...) asparagine glycan is linked to N51. N-linked (GlcNAc...) asparagine glycosylation is found at N423 and N549. The helical transmembrane segment at 697–717 (LVVAVAAVSCVFLAFVIVLLA) threads the bilayer. At 718 to 936 (HRLRRWHKSR…KKKSGKKEKK (219 aa)) the chain is on the cytoplasmic side. Disordered regions lie at residues 806-845 (EDTP…WPNN) and 906-936 (ATLT…KEKK). The span at 820-845 (WRFSQAQRPGTSGSQNGDDTGTWPNN) shows a compositional bias: polar residues. Basic residues predominate over residues 926-936 (NKKKSGKKEKK).

The protein resides in the cell membrane. Potential calcium-dependent cell-adhesion protein. May be involved in the establishment and maintenance of specific neuronal connections in the brain. The sequence is that of Protocadherin gamma-A10 (PCDHGA10) from Homo sapiens (Human).